The chain runs to 389 residues: Chalcone synthase 4 (389 aa).

C164 is an active-site residue.

The protein belongs to the thiolase-like superfamily. Chalcone/stilbene synthases family.

It catalyses the reaction (E)-4-coumaroyl-CoA + 3 malonyl-CoA + 3 H(+) = 2',4,4',6'-tetrahydroxychalcone + 3 CO2 + 4 CoA. It functions in the pathway secondary metabolite biosynthesis; flavonoid biosynthesis. The primary product of this enzyme is 4,2',4',6'-tetrahydroxychalcone (also termed naringenin-chalcone or chalcone) which can under specific conditions spontaneously isomerize into naringenin. This Pisum sativum (Garden pea) protein is Chalcone synthase 4 (CHS4).